We begin with the raw amino-acid sequence, 564 residues long: Glutamyl-tRNA(Gln) amidotransferase subunit B, mitochondrial (564 aa).

Residues 1-88 (MIRQCVSHRG…DTDAKLFSRA (88 aa)) constitute a mitochondrion transit peptide. The disordered stretch occupies residues 26–63 (PFHHPSPRPLGRKNWSTSDEAKSKRAAMRKGGAPPPEH).

Belongs to the GatB/GatE family. GatB subfamily. Subunit of the heterotrimeric GatCAB amidotransferase (AdT) complex, composed of A, B and C subunits.

The protein resides in the mitochondrion. It carries out the reaction L-glutamyl-tRNA(Gln) + L-glutamine + ATP + H2O = L-glutaminyl-tRNA(Gln) + L-glutamate + ADP + phosphate + H(+). Functionally, allows the formation of correctly charged Gln-tRNA(Gln) through the transamidation of misacylated Glu-tRNA(Gln) in the mitochondria. The reaction takes place in the presence of glutamine and ATP through an activated gamma-phospho-Glu-tRNA(Gln). This is Glutamyl-tRNA(Gln) amidotransferase subunit B, mitochondrial from Ajellomyces capsulatus (strain G186AR / H82 / ATCC MYA-2454 / RMSCC 2432) (Darling's disease fungus).